Reading from the N-terminus, the 467-residue chain is Probable Xaa-Pro aminopeptidase pepP (467 aa).

Residues Asp-264, Asp-275, Glu-398, and Glu-438 each coordinate Mn(2+).

The protein belongs to the peptidase M24B family. Mn(2+) serves as cofactor.

It carries out the reaction Release of any N-terminal amino acid, including proline, that is linked to proline, even from a dipeptide or tripeptide.. Catalyzes the removal of a penultimate prolyl residue from the N-termini of peptides. The polypeptide is Probable Xaa-Pro aminopeptidase pepP (pepP) (Neosartorya fischeri (strain ATCC 1020 / DSM 3700 / CBS 544.65 / FGSC A1164 / JCM 1740 / NRRL 181 / WB 181) (Aspergillus fischerianus)).